The sequence spans 358 residues: UPF0324 membrane protein CT0845 (358 aa).

10 consecutive transmembrane segments (helical) span residues 36–53, 57–76, 83–105, 115–134, 146–168, 178–200, 244–261, 276–295, 307–325, and 335–357; these read YFPG…ATFL, YGAP…RFLS, LVGI…GMRI, VKPV…FGLA, GVLT…AAVL, TIFT…PVVA, LLRV…SLIF, LLPP…SLGV, VSRW…KTSL, and PVSI…VVWM.

It belongs to the UPF0324 family.

The protein localises to the cell membrane. This Chlorobaculum tepidum (strain ATCC 49652 / DSM 12025 / NBRC 103806 / TLS) (Chlorobium tepidum) protein is UPF0324 membrane protein CT0845.